A 213-amino-acid chain; its full sequence is Urease accessory protein UreG (213 aa).

Position 17-24 (17-24) interacts with GTP; the sequence is GPVGSGKT.

It belongs to the SIMIBI class G3E GTPase family. UreG subfamily. As to quaternary structure, homodimer. UreD, UreF and UreG form a complex that acts as a GTP-hydrolysis-dependent molecular chaperone, activating the urease apoprotein by helping to assemble the nickel containing metallocenter of UreC. The UreE protein probably delivers the nickel.

The protein resides in the cytoplasm. Functionally, facilitates the functional incorporation of the urease nickel metallocenter. This process requires GTP hydrolysis, probably effectuated by UreG. The protein is Urease accessory protein UreG of Delftia acidovorans (strain DSM 14801 / SPH-1).